We begin with the raw amino-acid sequence, 676 residues long: Lon-like protease BrxL (676 aa).

The protein belongs to the BrxL family.

In terms of biological role, BREX systems (bacteriophage exclusion) provide immunity against bacteriophage. Part of a type 1 BREX system. This system allows phage adsorption but prevents phage DNA replication, without degradation of the phage DNA. Methylation of bacterial DNA by PglX probably guides self/non-self discrimination. When the brxA-brxB-brxC-pglX and pglZ-brxL operons are transformed into a susceptible B.subtilis strain (BEST7003) they confer resistance to bacteriophages SPbeta, SP16, Zeta, phi3T and SP02 and partial protection to phages SP01 and SP82G (these include lytic and temperate phage). They do not protect against phages phi105, rho10 or rho14. Additionally confers a very slight reduction in efficiency of plasmid transformation. This chain is Lon-like protease BrxL, found in Bacillus cereus (strain H3081.97).